The primary structure comprises 437 residues: uncharacterized protein (437 aa).

Positions 63-87 are enriched in polar residues; sequence PSSANVSFQNSDDNLSTSRGRSASP. Disordered stretches follow at residues 63 to 97, 112 to 147, and 346 to 437; these read PSSA…SNFP, VKKD…KKET, and PKNA…YSIW. The segment covering 399–409 has biased composition (polar residues); the sequence is EALSPSKSNPD. Residues 425-437 show a composition bias toward low complexity; the sequence is KKPSSSSSNYSIW.

This is an uncharacterized protein from Caenorhabditis elegans.